The following is a 345-amino-acid chain: Phosphoribosylformylglycinamidine cyclo-ligase (345 aa).

Belongs to the AIR synthase family.

The protein resides in the cytoplasm. It carries out the reaction 2-formamido-N(1)-(5-O-phospho-beta-D-ribosyl)acetamidine + ATP = 5-amino-1-(5-phospho-beta-D-ribosyl)imidazole + ADP + phosphate + H(+). Its pathway is purine metabolism; IMP biosynthesis via de novo pathway; 5-amino-1-(5-phospho-D-ribosyl)imidazole from N(2)-formyl-N(1)-(5-phospho-D-ribosyl)glycinamide: step 2/2. This chain is Phosphoribosylformylglycinamidine cyclo-ligase, found in Limosilactobacillus reuteri (strain DSM 20016) (Lactobacillus reuteri).